The sequence spans 61 residues: Small ribosomal subunit protein uS14 (61 aa).

Cys-24, Cys-27, Cys-40, and Cys-43 together coordinate Zn(2+).

Belongs to the universal ribosomal protein uS14 family. Zinc-binding uS14 subfamily. In terms of assembly, part of the 30S ribosomal subunit. Contacts proteins S3 and S10. The cofactor is Zn(2+).

Functionally, binds 16S rRNA, required for the assembly of 30S particles and may also be responsible for determining the conformation of the 16S rRNA at the A site. This is Small ribosomal subunit protein uS14 from Coprothermobacter proteolyticus (strain ATCC 35245 / DSM 5265 / OCM 4 / BT).